The primary structure comprises 161 residues: UPF0262 protein SPOA0072 (161 aa).

The interval 1–21 is disordered; it reads MTMSRISHIELDDSNLPPPTP.

Belongs to the UPF0262 family.

The polypeptide is UPF0262 protein SPOA0072 (Ruegeria pomeroyi (strain ATCC 700808 / DSM 15171 / DSS-3) (Silicibacter pomeroyi)).